A 319-amino-acid chain; its full sequence is L-lactate dehydrogenase 2 (319 aa).

NAD(+) is bound by residues Val16, Asp37, Lys42, Tyr68, and 82-83 (GA). Residues Gln85 and Arg91 each contribute to the substrate site. NAD(+)-binding positions include Ser104, 121–123 (AAN), and Ser146. A substrate-binding site is contributed by 123 to 126 (NPVD). 151–154 (DSAR) serves as a coordination point for substrate. The active-site Proton acceptor is the His178. Tyr222 carries the phosphotyrosine modification. Residue Thr231 coordinates substrate.

This sequence belongs to the LDH/MDH superfamily. LDH family. Homotetramer.

Its subcellular location is the cytoplasm. It catalyses the reaction (S)-lactate + NAD(+) = pyruvate + NADH + H(+). Its pathway is fermentation; pyruvate fermentation to lactate; (S)-lactate from pyruvate: step 1/1. In terms of biological role, catalyzes the conversion of lactate to pyruvate (Potential). Contributes to S.aureus growth during nitrosative stress in both aerobically and anaerobically cultured cells, despite playing a secondary role in this resistance mechanism. The chain is L-lactate dehydrogenase 2 from Staphylococcus aureus (strain USA300).